A 192-amino-acid chain; its full sequence is Anthrone oxygenase (192 aa).

3 consecutive transmembrane segments (helical) span residues 12 to 32, 54 to 74, and 86 to 106; these read IVTG…TVPV, GHIS…YIAA, and AALV…VMSS. Residues Asn130, Asn138, and Asn147 are each glycosylated (N-linked (GlcNAc...) asparagine). The helical transmembrane segment at 172 to 192 threads the bilayer; that stretch reads MHLVRSLFPLMAAVLGVGICV.

This sequence belongs to the anthrone oxygenase family.

Its subcellular location is the membrane. It carries out the reaction emodin anthrone + O2 = emodin + H2O + H(+). The protein operates within secondary metabolite biosynthesis. Functionally, anthrone oxygenase; part of the gene cluster that mediates the biosynthesis of monodictyphenone, a prenyl xanthone derivative. The pathway begins with the synthesis of atrochrysone thioester by the polyketide synthase (PKS) mdpG. The atrochrysone carboxyl ACP thioesterase mdpF then breaks the thioester bond and releases the atrochrysone carboxylic acid from mdpG. The atrochrysone carboxylic acid is then converted to atrochrysone which is further transformed into emodin anthrone by mdpH-1 and mdpH-2. Emodin is further modified to yield monodictyphenone via several steps involving mdpB, mdpC mdpJ, mdpK and mdpL. These enzymes with xptA, xptB and xptC are also proposed to be involved in the synthesis of shamixanthone from emodin. Especially, direct reduction of emodin by the short chain dehydrogenase mdpC followed by dehydration catalyzed by the scytalone dehydratase-like protein mdpB gives loss of oxygen and formation of chrysophanol intermediate in two simple steps. The protein is Anthrone oxygenase of Emericella nidulans (strain FGSC A4 / ATCC 38163 / CBS 112.46 / NRRL 194 / M139) (Aspergillus nidulans).